A 172-amino-acid polypeptide reads, in one-letter code: Thioredoxin M5, chloroplastic (172 aa).

A chloroplast-targeting transit peptide spans 1–59; the sequence is MALETCFRAWATLHAPQPPSSGGSRDRLLLSGAGSSQSKPRLSVASPSPLRPASRFACQ. The segment at 17-47 is disordered; that stretch reads QPPSSGGSRDRLLLSGAGSSQSKPRLSVASP. Residues 60 to 171 form the Thioredoxin domain; sequence CSNVVDEVVV…LATIIDKYVS (112 aa). Catalysis depends on nucleophile residues Cys95 and Cys98. Residues Cys95 and Cys98 are joined by a disulfide bond.

It belongs to the thioredoxin family. Plant M-type subfamily. Expressed in leaves and at lower levels in flowers.

Its subcellular location is the plastid. The protein resides in the chloroplast. Functionally, thiol-disulfide oxidoreductase probably involved in the redox regulation of chloroplastic enzymes. Required for chloroplast biogenesis and differentiation. Functions as an electron donor for plastidial 2-Cys peroxiredoxins and participates in hydrogen peroxide scavenging system in chloroplasts. Possesses reducing activity towards insulin disulfide bonds. This Oryza sativa subsp. japonica (Rice) protein is Thioredoxin M5, chloroplastic (TRXM).